The sequence spans 133 residues: UPF0344 protein SE_0666 (133 aa).

The next 4 helical transmembrane spans lie at 1–21, 42–62, 71–91, and 103–123; these read MLHVHILSWVLAIILFIATYL, LFMLLTLISGFWELIEEFMAA, MLLTLKMLCGLAVIAFMEISI, and FFWITIILIIITMAIGVILPW.

The protein belongs to the UPF0344 family.

The protein localises to the cell membrane. In Staphylococcus epidermidis (strain ATCC 12228 / FDA PCI 1200), this protein is UPF0344 protein SE_0666.